Reading from the N-terminus, the 180-residue chain is ATP-dependent protease subunit HslV (180 aa).

Residue Thr-7 is part of the active site. The Na(+) site is built by Gly-165, Cys-168, and Thr-171.

This sequence belongs to the peptidase T1B family. HslV subfamily. A double ring-shaped homohexamer of HslV is capped on each side by a ring-shaped HslU homohexamer. The assembly of the HslU/HslV complex is dependent on binding of ATP.

Its subcellular location is the cytoplasm. The enzyme catalyses ATP-dependent cleavage of peptide bonds with broad specificity.. Its activity is regulated as follows. Allosterically activated by HslU binding. In terms of biological role, protease subunit of a proteasome-like degradation complex believed to be a general protein degrading machinery. The chain is ATP-dependent protease subunit HslV from Bacillus cereus (strain Q1).